Here is a 476-residue protein sequence, read N- to C-terminus: Bifunctional protein HldE (476 aa).

Residues M1 to T318 are ribokinase. Residue N195–E198 participates in ATP binding. The active site involves D264. Residues M344–G476 form a cytidylyltransferase region.

This sequence in the N-terminal section; belongs to the carbohydrate kinase PfkB family. It in the C-terminal section; belongs to the cytidylyltransferase family. As to quaternary structure, homodimer.

The enzyme catalyses D-glycero-beta-D-manno-heptose 7-phosphate + ATP = D-glycero-beta-D-manno-heptose 1,7-bisphosphate + ADP + H(+). It catalyses the reaction D-glycero-beta-D-manno-heptose 1-phosphate + ATP + H(+) = ADP-D-glycero-beta-D-manno-heptose + diphosphate. Its pathway is nucleotide-sugar biosynthesis; ADP-L-glycero-beta-D-manno-heptose biosynthesis; ADP-L-glycero-beta-D-manno-heptose from D-glycero-beta-D-manno-heptose 7-phosphate: step 1/4. It functions in the pathway nucleotide-sugar biosynthesis; ADP-L-glycero-beta-D-manno-heptose biosynthesis; ADP-L-glycero-beta-D-manno-heptose from D-glycero-beta-D-manno-heptose 7-phosphate: step 3/4. It participates in bacterial outer membrane biogenesis; LPS core biosynthesis. Its function is as follows. Catalyzes the phosphorylation of D-glycero-D-manno-heptose 7-phosphate at the C-1 position to selectively form D-glycero-beta-D-manno-heptose-1,7-bisphosphate. Catalyzes the ADP transfer from ATP to D-glycero-beta-D-manno-heptose 1-phosphate, yielding ADP-D-glycero-beta-D-manno-heptose. In Vibrio vulnificus (strain YJ016), this protein is Bifunctional protein HldE.